The chain runs to 424 residues: Protein SamB (424 aa).

The UmuC domain occupies 2–189 (FALADVNSFY…QPVEEIWGVG (188 aa)).

It belongs to the DNA polymerase type-Y family.

Its function is as follows. Involved in UV protection and mutation. This chain is Protein SamB (samB), found in Salmonella typhimurium.